The following is a 270-amino-acid chain: Phosphatidylglycerol--prolipoprotein diacylglyceryl transferase (270 aa).

Helical transmembrane passes span 19–39 (FPVY…LWLA), 56–76 (LVLI…VIFE), 92–112 (QGGL…VLFA), and 116–136 (GVSF…GQAI). Arginine 138 provides a ligand contact to a 1,2-diacyl-sn-glycero-3-phospho-(1'-sn-glycerol). A run of 3 helical transmembrane segments spans residues 178–198 (HPTF…LLAL), 206–226 (GELF…VEGL), and 236–256 (LRIA…FIIV).

This sequence belongs to the Lgt family.

It is found in the cell membrane. It catalyses the reaction L-cysteinyl-[prolipoprotein] + a 1,2-diacyl-sn-glycero-3-phospho-(1'-sn-glycerol) = an S-1,2-diacyl-sn-glyceryl-L-cysteinyl-[prolipoprotein] + sn-glycerol 1-phosphate + H(+). The protein operates within protein modification; lipoprotein biosynthesis (diacylglyceryl transfer). Its function is as follows. Catalyzes the transfer of the diacylglyceryl group from phosphatidylglycerol to the sulfhydryl group of the N-terminal cysteine of a prolipoprotein, the first step in the formation of mature lipoproteins. The chain is Phosphatidylglycerol--prolipoprotein diacylglyceryl transferase from Bacillus cereus (strain B4264).